A 629-amino-acid chain; its full sequence is tRNA uridine 5-carboxymethylaminomethyl modification enzyme MnmG (629 aa).

13 to 18 contributes to the FAD binding site; the sequence is GGGHAG. 273-287 contributes to the NAD(+) binding site; that stretch reads GPRYCPSIEDKIHRF.

It belongs to the MnmG family. Homodimer. Heterotetramer of two MnmE and two MnmG subunits. FAD is required as a cofactor.

It is found in the cytoplasm. NAD-binding protein involved in the addition of a carboxymethylaminomethyl (cmnm) group at the wobble position (U34) of certain tRNAs, forming tRNA-cmnm(5)s(2)U34. This Shewanella baltica (strain OS223) protein is tRNA uridine 5-carboxymethylaminomethyl modification enzyme MnmG.